Here is a 2298-residue protein sequence, read N- to C-terminus: Protein Ycf2 (2298 aa).

Gly1640–Ser1647 contributes to the ATP binding site.

This sequence belongs to the Ycf2 family.

The protein resides in the plastid. Its subcellular location is the chloroplast stroma. Probable ATPase of unknown function. Its presence in a non-photosynthetic plant (Epifagus virginiana) and experiments in tobacco indicate that it has an essential function which is probably not related to photosynthesis. The chain is Protein Ycf2 from Carica papaya (Papaya).